A 303-amino-acid chain; its full sequence is Aspartate carbamoyltransferase catalytic subunit (303 aa).

Carbamoyl phosphate contacts are provided by R51 and T52. K80 is a binding site for L-aspartate. Carbamoyl phosphate is bound by residues R101, H129, and Q132. Residues R162 and R221 each contribute to the L-aspartate site. L260 and P261 together coordinate carbamoyl phosphate.

It belongs to the aspartate/ornithine carbamoyltransferase superfamily. ATCase family. As to quaternary structure, heterooligomer of catalytic and regulatory chains.

The enzyme catalyses carbamoyl phosphate + L-aspartate = N-carbamoyl-L-aspartate + phosphate + H(+). The protein operates within pyrimidine metabolism; UMP biosynthesis via de novo pathway; (S)-dihydroorotate from bicarbonate: step 2/3. Functionally, catalyzes the condensation of carbamoyl phosphate and aspartate to form carbamoyl aspartate and inorganic phosphate, the committed step in the de novo pyrimidine nucleotide biosynthesis pathway. The polypeptide is Aspartate carbamoyltransferase catalytic subunit (Saccharolobus islandicus (strain M.16.4 / Kamchatka #3) (Sulfolobus islandicus)).